A 443-amino-acid polypeptide reads, in one-letter code: Tubulin beta chain (443 aa).

8 residues coordinate GTP: glutamine 11, glutamate 69, serine 138, glycine 142, threonine 143, glycine 144, asparagine 204, and asparagine 226. A Mg(2+)-binding site is contributed by glutamate 69. The disordered stretch occupies residues 424-443; it reads QYQDATAEEEGEFEEEEGEN. The segment covering 429-443 has biased composition (acidic residues); that stretch reads TAEEEGEFEEEEGEN.

This sequence belongs to the tubulin family. As to quaternary structure, dimer of alpha and beta chains. A typical microtubule is a hollow water-filled tube with an outer diameter of 25 nm and an inner diameter of 15 nM. Alpha-beta heterodimers associate head-to-tail to form protofilaments running lengthwise along the microtubule wall with the beta-tubulin subunit facing the microtubule plus end conferring a structural polarity. Microtubules usually have 13 protofilaments but different protofilament numbers can be found in some organisms and specialized cells. Mg(2+) is required as a cofactor.

It localises to the cytoplasm. The protein localises to the cytoskeleton. Tubulin is the major constituent of microtubules, a cylinder consisting of laterally associated linear protofilaments composed of alpha- and beta-tubulin heterodimers. Microtubules grow by the addition of GTP-tubulin dimers to the microtubule end, where a stabilizing cap forms. Below the cap, tubulin dimers are in GDP-bound state, owing to GTPase activity of alpha-tubulin. The chain is Tubulin beta chain (BETA-TT1) from Tetrahymena pyriformis.